The following is a 141-amino-acid chain: Large ribosomal subunit protein uL11 (141 aa).

This sequence belongs to the universal ribosomal protein uL11 family. As to quaternary structure, part of the ribosomal stalk of the 50S ribosomal subunit. Interacts with L10 and the large rRNA to form the base of the stalk. L10 forms an elongated spine to which L12 dimers bind in a sequential fashion forming a multimeric L10(L12)X complex. In terms of processing, one or more lysine residues are methylated.

Functionally, forms part of the ribosomal stalk which helps the ribosome interact with GTP-bound translation factors. The protein is Large ribosomal subunit protein uL11 of Prochlorococcus marinus (strain MIT 9313).